We begin with the raw amino-acid sequence, 387 residues long: ATP-dependent Clp protease proteolytic subunit-related protein 1, chloroplastic (387 aa).

A chloroplast-targeting transit peptide spans 1-41; it reads MATALVSPLTSQLNHEAVCSKFVLPKSPFMSGSKLFSSNMP. Residues 355 to 365 show a composition bias toward basic and acidic residues; it reads QDSSFEKRDYD. The interval 355–387 is disordered; it reads QDSSFEKRDYDGTLAQRAMRPGGGSPAAPAGLR.

The protein belongs to the peptidase S14 family. In terms of assembly, component of the chloroplastic Clp protease core complex which consist of at least 16 proteins: CLPP4 (3 copies), CLPP5 (3 copies), CLPR4 (2 copies), ClpP1 (1 copy), CLPP6 (1 copy), CLPR2 (1 copy), CLPT1 (1 copy), CLPT2 (1 copy) and 3 copies of CLPP3 and/or CLPR1 and/or CLPR3. The core complex is organized in two heptameric rings, one containing CLPP3,4,5,6 in a 1:2:3:1 ratio and the other CLPP1 and CLPR1,2,3,4 in a 3:1:1:1:1 ratio.

Its subcellular location is the plastid. The protein localises to the chloroplast stroma. Required for chloroplast development and differentiation. The polypeptide is ATP-dependent Clp protease proteolytic subunit-related protein 1, chloroplastic (Arabidopsis thaliana (Mouse-ear cress)).